A 518-amino-acid chain; its full sequence is uncharacterized protein (518 aa).

The N-terminal stretch at 1–21 (MWKWKVILLFLAEMFVSGVNG) is a signal peptide. Residues Asn30, Asn142, Asn295, Asn342, Asn362, Asn410, and Asn503 are each glycosylated (N-linked (GlcNAc...) asparagine). In terms of domain architecture, CUB spans 389–517 (CPPFGITNSV…RGFWVSITPQ (129 aa)).

It localises to the secreted. This is an uncharacterized protein from Caenorhabditis elegans.